Consider the following 280-residue polypeptide: Purine nucleoside phosphorylase (280 aa).

Residues serine 15 and arginine 55–histidine 56 contribute to the phosphate site. Substrate is bound at residue methionine 194. Phosphate is bound at residue threonine 195. Aspartate 218 to aspartate 220 provides a ligand contact to substrate.

This sequence belongs to the PNP/MTAP phosphorylase family. MTAP subfamily. As to quaternary structure, homohexamer. Dimer of a homotrimer.

The catalysed reaction is a purine D-ribonucleoside + phosphate = a purine nucleobase + alpha-D-ribose 1-phosphate. It functions in the pathway purine metabolism; purine nucleoside salvage. Its function is as follows. Purine nucleoside phosphorylase involved in purine salvage. The chain is Purine nucleoside phosphorylase from Streptomyces coelicolor (strain ATCC BAA-471 / A3(2) / M145).